Consider the following 736-residue polypeptide: MVVFNGLLKIKICEAVSLKPTAWSLRHAVGPRPQTFLLDPYIALNVDDSRIGQTATKQKTNSPAWHDEFVTDVCNGRKIELAVFHDAPIGYDDFVANCTIQFEELLQNGSRHFEDWIDLEPEGKVYVIIDLSGSSGEAPKDNEERVFRERMRPRKRQGAVRRRVHQVNGHKFMATYLRQPTYCSHCRDFIWGVIGKQGYQCQVCTCVVHKRCHELIITKVAGLKKQETPDEVGSQRFSVNMPHKFGIHNYKVPTFCDHCGSLLWGLLRQGLQCKVCKMNVHRRCETNVAPNCGVDARGIAKVLADLGVTPDKITNSGQRRKKLIGGAESPQPTSGSSPSEEDRSKSAPTSPCDQELKELENNIRKALSFDNRGEEHRAASSTDGQLGSPENGEVRQGQAKRLGLDEFNFIKVLGKGSFGKVMLAELKGKDEVYAVKVLKKDVILQDDDVDCTMTEKRILALARKHPYLTQLYCCFQTKDRLFFVMEYVNGGDLMFQIQRSRKFDEPRSRFYAAEVTSALMFLHQHGVIYRDLKLDNILLDAEGHCKLADFGMCKEGILNGVTTTTFCGTPDYIAPEILQELEYGPSVDWWALGVLMYEMMAGQPPFEADNEDDLFESILHDDVLYPVWLSKEAVSILKAFMTKNPHKRLGCVAAQNGEDAIKQHPFFKEIDWVLLEQKKIKPPFKPRIKTKRDVNNFDQDFTREEPVLTLVDEAIVKQINQEEFKGFSYFGEDLMP.

A C2 domain is found at methionine 1–isoleucine 117. Serine 62 bears the Phosphoserine mark. The Phorbol-ester/DAG-type 1 zinc-finger motif lies at glycine 169–valine 220. Threonine 228 is subject to Phosphothreonine. Residue serine 234 is modified to Phosphoserine. Residues proline 242–cysteine 292 form a Phorbol-ester/DAG-type 2 zinc finger. A Phosphothreonine modification is found at threonine 309. Residues proline 310 to leucine 356 form a disordered region. 3 positions are modified to phosphoserine: serine 316, serine 329, and serine 337. Phosphoserine; by GSK3-beta is present on serine 346. A Phosphothreonine modification is found at threonine 349. Serine 350 bears the Phosphoserine; by MAPK11 and MAPK14 mark. Phosphoserine; by autocatalysis is present on serine 368. Residues phenylalanine 369 to glycine 397 form a disordered region. Serine 388 is modified (phosphoserine). The 261-residue stretch at phenylalanine 407–phenylalanine 667 folds into the Protein kinase domain. Residues leucine 413 to valine 421 and lysine 436 contribute to the ATP site. The active-site Proton acceptor is aspartate 531. Threonine 565 is modified (phosphothreonine; by PDPK1). The region spanning lysine 668–proline 736 is the AGC-kinase C-terminal domain. Threonine 702 carries the phosphothreonine modification. At threonine 709 the chain carries Phosphothreonine; by autocatalysis. Position 728 is a phosphoserine; by autocatalysis (serine 728).

The protein belongs to the protein kinase superfamily. AGC Ser/Thr protein kinase family. PKC subfamily. In terms of assembly, forms a ternary complex with TRIM63 and RACK1/GN2BL1. Can form a complex with PDLIM5 and N-type calcium channel. Interacts with COPB1. Interacts with DGKQ. Interacts with STAT3. Interacts with YWHAB. Interacts with HSP90AB1; promotes functional activation in a heat shock-dependent manner. Interacts (via phorbol-ester/DAG-type 2 domain) with PRPH and VIM. Interacts with NLRP5/MATER. In terms of processing, phosphorylation on Thr-565 by PDPK1 triggers autophosphorylation on Ser-728. Phosphorylation in the hinge domain at Ser-350 by MAPK11 or MAPK14, Ser-346 by GSK3B and Ser-368 by autophosphorylation is required for interaction with YWHAB. In response to growth factors, phosphorylated at Thr-702 and Ser-728 by the mTORC2 complex, promoting autophosphorylation and activation of PRKCE.

The protein localises to the cytoplasm. The protein resides in the cytoskeleton. Its subcellular location is the cell membrane. It localises to the perinuclear region. It is found in the nucleus. It catalyses the reaction L-seryl-[protein] + ATP = O-phospho-L-seryl-[protein] + ADP + H(+). The catalysed reaction is L-threonyl-[protein] + ATP = O-phospho-L-threonyl-[protein] + ADP + H(+). Novel PKCs (PRKCD, PRKCE, PRKCH and PRKCQ) are calcium-insensitive, but activated by diacylglycerol (DAG) and phosphatidylserine. Three specific sites; Thr-565 (activation loop of the kinase domain), Thr-709 (turn motif) and Ser-728 (hydrophobic region), need to be phosphorylated for its full activation. Its function is as follows. Calcium-independent, phospholipid- and diacylglycerol (DAG)-dependent serine/threonine-protein kinase that plays essential roles in the regulation of multiple cellular processes linked to cytoskeletal proteins, such as cell adhesion, motility, migration and cell cycle, functions in neuron growth and ion channel regulation, and is involved in immune response, cancer cell invasion and regulation of apoptosis. Mediates cell adhesion to the extracellular matrix via integrin-dependent signaling, by mediating angiotensin-2-induced activation of integrin beta-1 (ITGB1) in cardiac fibroblasts. Phosphorylates MARCKS, which phosphorylates and activates PTK2/FAK, leading to the spread of cardiomyocytes. Involved in the control of the directional transport of ITGB1 in mesenchymal cells by phosphorylating vimentin (VIM), an intermediate filament (IF) protein. In epithelial cells, associates with and phosphorylates keratin-8 (KRT8), which induces targeting of desmoplakin at desmosomes and regulates cell-cell contact. Phosphorylates IQGAP1, which binds to CDC42, mediating epithelial cell-cell detachment prior to migration. During cytokinesis, forms a complex with YWHAB, which is crucial for daughter cell separation, and facilitates abscission by a mechanism which may implicate the regulation of RHOA. In cardiac myocytes, regulates myofilament function and excitation coupling at the Z-lines, where it is indirectly associated with F-actin via interaction with COPB1. During endothelin-induced cardiomyocyte hypertrophy, mediates activation of PTK2/FAK, which is critical for cardiomyocyte survival and regulation of sarcomere length. Plays a role in the pathogenesis of dilated cardiomyopathy via persistent phosphorylation of troponin I (TNNI3). Involved in nerve growth factor (NFG)-induced neurite outgrowth and neuron morphological change independently of its kinase activity, by inhibition of RHOA pathway, activation of CDC42 and cytoskeletal rearrangement. May be involved in presynaptic facilitation by mediating phorbol ester-induced synaptic potentiation. Phosphorylates gamma-aminobutyric acid receptor subunit gamma-2 (GABRG2), which reduces the response of GABA receptors to ethanol and benzodiazepines and may mediate acute tolerance to the intoxicating effects of ethanol. Upon PMA treatment, phosphorylates the capsaicin- and heat-activated cation channel TRPV1, which is required for bradykinin-induced sensitization of the heat response in nociceptive neurons. Is able to form a complex with PDLIM5 and N-type calcium channel, and may enhance channel activities and potentiates fast synaptic transmission by phosphorylating the pore-forming alpha subunit CACNA1B (CaV2.2). Downstream of TLR4, plays an important role in the lipopolysaccharide (LPS)-induced immune response by phosphorylating and activating TICAM2/TRAM, which in turn activates the transcription factor IRF3 and subsequent cytokines production. In differentiating erythroid progenitors, is regulated by EPO and controls the protection against the TNFSF10/TRAIL-mediated apoptosis, via BCL2. May be involved in the regulation of the insulin-induced phosphorylation and activation of AKT1. Phosphorylates NLRP5/MATER and may thereby modulate AKT pathway activation in cumulus cells. Phosphorylates and activates LRRK1, which phosphorylates RAB proteins involved in intracellular trafficking. The chain is Protein kinase C epsilon type (PRKCE) from Oryctolagus cuniculus (Rabbit).